A 188-amino-acid chain; its full sequence is Insulin-like growth factor 1 (188 aa).

The interval 45–73 is b; that stretch reads GPETLCGAELVDTLQFVCGERGFYFSKPT. 3 disulfide bridges follow: Cys50–Cys92, Cys62–Cys105, and Cys91–Cys96. The segment at 74 to 85 is c; it reads GYGPSSRRSHNR. Residues 86-106 form an a region; the sequence is GIVDECCFQSCELRRLEMYCA. The d stretch occupies residues 107–114; sequence PVKSGKAA. Positions 115–188 are cleaved as a propeptide — e peptide; it reads RSVRAQRHTD…GNTGGRNYRM (74 aa). The interval 115-188 is disordered; it reads RSVRAQRHTD…GNTGGRNYRM (74 aa). The span at 140–153 shows a compositional bias: basic and acidic residues; that stretch reads RGTERRTAQHPDKT.

It belongs to the insulin family. In terms of tissue distribution, all the isoforms are expressed in embryos, juvenile and adult liver, muscle and brain. At least one isoform is expressed in heart, kidney, testes, ovary, adipose tissue and spleen of juvenile salmon.

It is found in the secreted. Functionally, the insulin-like growth factors, isolated from plasma, are structurally and functionally related to insulin but have a much higher growth-promoting activity. Acts as a ligand for IGF1R. Binds to the alpha subunit of IGF1R, leading to the activation of the intrinsic tyrosine kinase activity which autophosphorylates tyrosine residues in the beta subunit thus initiatiating a cascade of down-stream signaling events leading to activation of the PI3K-AKT/PKB and the Ras-MAPK pathways. Binds to integrins. Its binding to integrins and subsequent ternary complex formation with integrins and IGFR1 are essential for IGF1 signaling. In Oncorhynchus kisutch (Coho salmon), this protein is Insulin-like growth factor 1.